The primary structure comprises 437 residues: ATP-dependent RNA helicase SUB2 (437 aa).

The segment covering 1–19 has biased composition (acidic residues); it reads MSHEAEEDLLEYSDNEQEV. Residues 1 to 45 are disordered; sequence MSHEAEEDLLEYSDNEQEVQVDNKATEVNAEGNGESQAKDSDKKG. The Q motif motif lies at 53-81; that stretch reads TGFKDFLLKPELSRAIIDCGFEHPSEVQQ. The region spanning 84 to 259 is the Helicase ATP-binding domain; the sequence is IPQSIHGTDV…RRFLQNPLEI (176 aa). Residue 97 to 104 participates in ATP binding; it reads AKSGLGKT. The DECD box signature appears at 206–209; it reads DECD. The region spanning 287-432 is the Helicase C-terminal domain; it reads KLAQLLDDLE…EFPEEGVDPS (146 aa).

The protein belongs to the DEAD box helicase family. DECD subfamily.

The protein localises to the nucleus. It catalyses the reaction ATP + H2O = ADP + phosphate + H(+). Its function is as follows. ATP-binding RNA helicase involved in transcription elongation and required for the export of mRNA out of the nucleus. SUB2 also plays a role in pre-mRNA splicing and spliceosome assembly. May be involved in rDNA and telomeric silencing, and maintenance of genome integrity. The protein is ATP-dependent RNA helicase SUB2 (SUB2) of Kluyveromyces lactis (strain ATCC 8585 / CBS 2359 / DSM 70799 / NBRC 1267 / NRRL Y-1140 / WM37) (Yeast).